A 226-amino-acid polypeptide reads, in one-letter code: ATP synthase F(0) complex subunit a (226 aa).

Transmembrane regions (helical) follow at residues 11–31 (APSM…SILF), 68–88 (WALM…LGLL), 97–117 (QLSM…ITGF), 138–158 (IPML…ALAV), 164–184 (ITAG…LINI), and 189–209 (AFIT…VALI).

This sequence belongs to the ATPase A chain family. In terms of assembly, component of the ATP synthase complex composed at least of ATP5F1A/subunit alpha, ATP5F1B/subunit beta, ATP5MC1/subunit c (homooctomer), MT-ATP6/subunit a, MT-ATP8/subunit 8, ATP5ME/subunit e, ATP5MF/subunit f, ATP5MG/subunit g, ATP5MK/subunit k, ATP5MJ/subunit j, ATP5F1C/subunit gamma, ATP5F1D/subunit delta, ATP5F1E/subunit epsilon, ATP5PF/subunit F6, ATP5PB/subunit b, ATP5PD/subunit d, ATP5PO/subunit OSCP. ATP synthase complex consists of a soluble F(1) head domain (subunits alpha(3) and beta(3)) - the catalytic core - and a membrane F(0) domain - the membrane proton channel (subunits c, a, 8, e, f, g, k and j). These two domains are linked by a central stalk (subunits gamma, delta, and epsilon) rotating inside the F1 region and a stationary peripheral stalk (subunits F6, b, d, and OSCP). Interacts with DNAJC30; interaction is direct.

It localises to the mitochondrion inner membrane. The catalysed reaction is H(+)(in) = H(+)(out). In terms of biological role, subunit a, of the mitochondrial membrane ATP synthase complex (F(1)F(0) ATP synthase or Complex V) that produces ATP from ADP in the presence of a proton gradient across the membrane which is generated by electron transport complexes of the respiratory chain. ATP synthase complex consist of a soluble F(1) head domain - the catalytic core - and a membrane F(1) domain - the membrane proton channel. These two domains are linked by a central stalk rotating inside the F(1) region and a stationary peripheral stalk. During catalysis, ATP synthesis in the catalytic domain of F(1) is coupled via a rotary mechanism of the central stalk subunits to proton translocation. With the subunit c (ATP5MC1), forms the proton-conducting channel in the F(0) domain, that contains two crucial half-channels (inlet and outlet) that facilitate proton movement from the mitochondrial intermembrane space (IMS) into the matrix. Protons are taken up via the inlet half-channel and released through the outlet half-channel, following a Grotthuss mechanism. This Canis lupus familiaris (Dog) protein is ATP synthase F(0) complex subunit a.